Consider the following 286-residue polypeptide: Protein FAM87A (286 aa).

The next 2 helical transmembrane spans lie at 68 to 88 (YLHS…ETAL) and 161 to 181 (SFFV…GDML).

It belongs to the FAM87 family.

It localises to the membrane. The sequence is that of Protein FAM87A (FAM87A) from Homo sapiens (Human).